A 694-amino-acid chain; its full sequence is Nucleolin (694 aa).

Positions 1–277 (MVKLAKTPKN…EAKKKKTETP (277 aa)) are disordered. Over residues 26-40 (ESEEEESSDLEESSG) the composition is skewed to acidic residues. The span at 46–108 (PPKKQQKAAV…AVVGKGAKNG (63 aa)) shows a compositional bias: low complexity. Tandem repeats lie at residues 55 to 61 (VTPAKKA), 62 to 68 (ATPAKKA), 69 to 75 (ATPAKKA), 76 to 82 (VTPAKKA), and 84 to 90 (ATPAKKA). A 5 X 7 AA tandem repeats of X-T-P-X-K-K-X region spans residues 55 to 90 (VTPAKKAATPAKKAATPAKKAVTPAKKAVATPAKKA). 2 positions are modified to phosphoserine: S116 and S136. A compositionally biased stretch (acidic residues) spans 116 to 142 (SEEEDEDDEDDEEDEDEEEESDEEEEP). Residues 143–168 (AVPVKPAAKKSAAAVPAKKPAVVPAK) are compositionally biased toward low complexity. At S171 the chain carries Phosphoserine. Over residues 171-194 (SEEEEEEDDEEEDEEDDESEDEAM) the composition is skewed to acidic residues. The span at 196-213 (TTPAPVKKPTPAKATPAK) shows a compositional bias: low complexity. Residues 218 to 246 (SEDEEDEEDEDEDEEDEDDEEEDEEESED) are compositionally biased toward acidic residues. RRM domains lie at 281 to 357 (FSLF…KAKS), 371 to 445 (RTLF…YTGE), 461 to 535 (KTLI…FSSP), and 553 to 628 (KTLF…FAKP). Positions 631–694 (EFQRGGGFGG…KPQGKKIKFE (64 aa)) are disordered. A compositionally biased stretch (gly residues) spans 633 to 680 (QRGGGFGGGFGGRGGRGGRGGGRGGFGGRGGGRGFGGRGGGFRGGRGG). The segment covering 681 to 694 (GGDHKPQGKKIKFE) has biased composition (basic and acidic residues).

Post-translationally, highly phosphorylated during mitosis.

It localises to the nucleus. The protein resides in the nucleolus. Functionally, nucleolin is the major nucleolar protein of growing eukaryotic cells. It is found associated with intranucleolar chromatin and pre-ribosomal particles. It induces chromatin decondensation by binding to histone H1. It is thought to play a role in pre-rRNA transcription and ribosome assembly. This chain is Nucleolin (NCL), found in Gallus gallus (Chicken).